The chain runs to 125 residues: SOSS complex subunit C homolog B (125 aa).

2 disordered regions span residues 44–73 (PAPQLLGQPTTTTATPDLVSTNSTPPRAAF) and 105–125 (PATPSTTTPPITPIANANNPK).

It belongs to the SOSS-C family.

The chain is SOSS complex subunit C homolog B from Drosophila willistoni (Fruit fly).